The sequence spans 242 residues: Uridylate kinase (242 aa).

15–18 (KLSG) provides a ligand contact to ATP. Position 57 (Gly57) interacts with UMP. Gly58 and Arg62 together coordinate ATP. UMP contacts are provided by residues Asp78 and 139-146 (TGNPFFTT). Thr166, Tyr172, and Asp175 together coordinate ATP.

The protein belongs to the UMP kinase family. In terms of assembly, homohexamer.

Its subcellular location is the cytoplasm. The catalysed reaction is UMP + ATP = UDP + ADP. It functions in the pathway pyrimidine metabolism; CTP biosynthesis via de novo pathway; UDP from UMP (UMPK route): step 1/1. Inhibited by UTP. Its function is as follows. Catalyzes the reversible phosphorylation of UMP to UDP. This Acinetobacter baumannii (strain ATCC 17978 / DSM 105126 / CIP 53.77 / LMG 1025 / NCDC KC755 / 5377) protein is Uridylate kinase.